Here is a 160-residue protein sequence, read N- to C-terminus: Transcription elongation factor GreA (160 aa).

It belongs to the GreA/GreB family.

Functionally, necessary for efficient RNA polymerase transcription elongation past template-encoded arresting sites. The arresting sites in DNA have the property of trapping a certain fraction of elongating RNA polymerases that pass through, resulting in locked ternary complexes. Cleavage of the nascent transcript by cleavage factors such as GreA or GreB allows the resumption of elongation from the new 3'terminus. GreA releases sequences of 2 to 3 nucleotides. In Leuconostoc citreum (strain KM20), this protein is Transcription elongation factor GreA.